We begin with the raw amino-acid sequence, 134 residues long: Photosystem II lipoprotein Psb27 (134 aa).

The N-terminal stretch at 1 to 24 is a signal peptide; it reads MSFLKNQLSRLLALILVVAIGLTA. C25 carries the N-palmitoyl cysteine lipid modification. Residue C25 is the site of S-diacylglycerol cysteine attachment.

This sequence belongs to the Psb27 family. In terms of assembly, monomer. Forms a complex with a monomeric, partially assembled PSII. This is probably the complex in which D1 is assembled and/or replaced. Present in 6-10% of PSII complexes; mostly in monomeric PSII. These PSII do not evolve oxygen, do not have an assembled calcium-manganese-oxide cluster. Psb27-containing PSII seem to be assembly intermediates; a wild-type strain includes the intrinsic membrane proteins, Psb27, Pbs28, substoichiometric amounts of PsbO and PsbQ but no PsbU or PsbV, while a ctpA deletion mutant includes the intrinsic membrane proteins (D1 as precursor), Psb27, a very low amount of PsbO and PsbQ, but no PsbU or PsbV. Small amounts of Psb27 interact with the lumenal domain of CP43 (psbC) in wild-type and a ctpA mutant. A small amount can also be detected in monomeric and trimeric photosystem I (PSI), possibly via association with PsaB.

The protein resides in the cellular thylakoid membrane. Its function is as follows. Plays a role in the repair and/or biogenesis of the calcium-manganese-oxide cluster on the lumenal face of the thylakoid membrane. Photosystem II (PSII) complexes containing this protein are monomeric, are assembly intermediates lacking the calcium-manganese-oxide cluster and miss some of the lumenal subunits. Probably blocks binding of some of the small lumenal subunits. The chain is Photosystem II lipoprotein Psb27 from Synechocystis sp. (strain ATCC 27184 / PCC 6803 / Kazusa).